The primary structure comprises 303 residues: Peroxisomal trans-2-enoyl-CoA reductase (303 aa).

An NADP(+)-binding site is contributed by 23–47 (VTGGATGIGKAIVKELLELGSNVVI). An N6-succinyllysine modification is found at lysine 32. Serine 49 bears the Phosphoserine mark. Tyrosine 179 functions as the Proton acceptor in the catalytic mechanism. A Phosphotyrosine modification is found at tyrosine 179. The Microbody targeting signal motif lies at 301 to 303 (AKL).

It belongs to the short-chain dehydrogenases/reductases (SDR) family. As to quaternary structure, interacts with PEX5, probably required to target it into peroxisomes.

It is found in the peroxisome. The catalysed reaction is a (2E)-enoyl-CoA + NADPH + H(+) = a 2,3-saturated acyl-CoA + NADP(+). The enzyme catalyses (2E)-hexenoyl-CoA + NADPH + H(+) = hexanoyl-CoA + NADP(+). It carries out the reaction (2E)-octenoyl-CoA + NADPH + H(+) = octanoyl-CoA + NADP(+). It catalyses the reaction (2E)-decenoyl-CoA + NADPH + H(+) = decanoyl-CoA + NADP(+). The catalysed reaction is (2E)-dodecenoyl-CoA + NADPH + H(+) = dodecanoyl-CoA + NADP(+). The enzyme catalyses (2E)-tetradecenoyl-CoA + NADPH + H(+) = tetradecanoyl-CoA + NADP(+). The protein operates within lipid metabolism; fatty acid biosynthesis. In terms of biological role, participates in chain elongation of fatty acids. Catalyzes the reduction of trans-2-enoyl-CoAs of varying chain lengths from 6:1 to 16:1, having maximum activity with 10:1 CoA. Has no 2,4-dienoyl-CoA reductase activity. This Pongo abelii (Sumatran orangutan) protein is Peroxisomal trans-2-enoyl-CoA reductase (PECR).